The primary structure comprises 485 residues: MASTGLTNIQEKTTCPVCQELLTKALSLGCGHRVCQACLITKKNAVINPREKSSCPVCGTRFSLENLQANKHLANVVERLGEVKLKPDIGTKRDLCVHHGEKLLLFCKEDKKAICWVCERSQEHRGHHTFLWEEAVRECQENLQKALTRLRKEQEKVETLEADIKEDRLSWKCQVQTERQRIQTGFNQLRRILDKEEQRELKRLREEEQMILDSLAGAEAELAQQSQLVEELISDLELRREWSDTELLQDMSGILKWSQIWTLKKPKAVSKKLSMVFQAPDLSGMLQKFRELTAVRAYWDNFTFNPENLNLNLILSEDHRQVTSVSIWPFKCCNNGILGSKCFSSGKHYWEVDVSEKKAWTLGVYTRKRTLRFDVRQRKGQPNGYHRYKPQNGYWVIGLQHGSKYSIFEDSSNCDPTVLNPFVATPLHRVGVFLDCEEGTVSFLNVTNHGSLIYKFSQCCFSQPAYPYFNPWDCPAPMTLCPLNS.

An RING-type zinc finger spans residues 15 to 59 (CPVCQELLTKALSLGCGHRVCQACLITKKNAVINPREKSSCPVCG). The segment at 91-132 (TKRDLCVHHGEKLLLFCKEDKKAICWVCERSQEHRGHHTFLW) adopts a B box-type zinc-finger fold. Zn(2+)-binding residues include Cys96, His99, Cys118, and His124. A coiled-coil region spans residues 136 to 170 (VRECQENLQKALTRLRKEQEKVETLEADIKEDRLS). In terms of domain architecture, B30.2/SPRY spans 282 to 485 (LSGMLQKFRE…APMTLCPLNS (204 aa)).

Belongs to the TRIM/RBCC family. In terms of assembly, homotrimer. Interacts (via B-box and SPRY domain) with TRIM5.

The protein resides in the cytoplasm. It localises to the mitochondrion. It carries out the reaction S-ubiquitinyl-[E2 ubiquitin-conjugating enzyme]-L-cysteine + [acceptor protein]-L-lysine = [E2 ubiquitin-conjugating enzyme]-L-cysteine + N(6)-ubiquitinyl-[acceptor protein]-L-lysine.. Its pathway is protein modification; protein ubiquitination. Its function is as follows. Functions as antiviral protein and contributes to the defense against retroviral infections. Acts as a capsid-specific restriction factor with the help of TRIM5 and prevents infection from non-host-adapted retroviruses. During influenza A virus infection, promotes programmed cell death by targeting ZBP1 for 'Lys-63'-linked polyubiquitination. In turn, promotes ZBP1 recruitment of RIPK3 to mediate virus-induced programmed necrosis. Negatively regulates the function of mitochondria by enhancing mitochondrial depolarization leading to cytochrome c release and mitochondria-dependent apoptosis. Also promotes the formation of multinucleated giant cells by means of cell fusion and phagocytosis in epithelial cells. Plays an essential role in sustaining the integrity of the inner mucus layer in the colon by controlling the exocytosis of the major component of colonic mucus MUC2 from colonic goblet cells. This chain is E3 ubiquitin-protein ligase TRIM34A, found in Mus musculus (Mouse).